A 361-amino-acid polypeptide reads, in one-letter code: MLVSDFHFDLPDELIARYPTEERTASRLLHLNGETGHFEDKQFFDLLDQINEGDLLIFNNTRVIPARLYGRKASGGKLEILVERVLDEHRCLAHVRASKAPKEGAELVLGEDKLGEGNGFKAIMTARHDALFELHFNEEQPLFDLLQQAGHMPLPPYIDRPDEDADQERYQTVYSKVLGAVAAPTAGLHFDNPTLEKLKAKGVNIAFVTLHVGAGTFQPVRVDNILDHKMHAEYAEVSQAVVDQILATKATGKRVIAVGTTSVRSIESAAQAAEKEGKLITPFFSDTSIFLYPGKTFRIVDALVTNFHLPESTLIMLVSAFAGYRNTMKAYQHAVEAKYRFFSYGDAMFINKNPNALNDLP.

This sequence belongs to the QueA family. In terms of assembly, monomer.

Its subcellular location is the cytoplasm. The catalysed reaction is 7-aminomethyl-7-carbaguanosine(34) in tRNA + S-adenosyl-L-methionine = epoxyqueuosine(34) in tRNA + adenine + L-methionine + 2 H(+). It participates in tRNA modification; tRNA-queuosine biosynthesis. Transfers and isomerizes the ribose moiety from AdoMet to the 7-aminomethyl group of 7-deazaguanine (preQ1-tRNA) to give epoxyqueuosine (oQ-tRNA). This is S-adenosylmethionine:tRNA ribosyltransferase-isomerase from Actinobacillus pleuropneumoniae serotype 5b (strain L20).